The primary structure comprises 209 residues: Dual specificity protein phosphatase 22 (209 aa).

The Tyrosine-protein phosphatase domain occupies 4–144 (GMNKILPSLF…LEDFGKHDVY (141 aa)). The Phosphocysteine intermediate role is filled by Cys-88. A disordered region spans residues 170 to 193 (DKHKQQEAAESQSATSSGRQWSSH). Low complexity predominate over residues 177–193 (AAESQSATSSGRQWSSH).

Belongs to the protein-tyrosine phosphatase family. Non-receptor class dual specificity subfamily.

It localises to the cytoplasm. The protein resides in the nucleus. It catalyses the reaction O-phospho-L-tyrosyl-[protein] + H2O = L-tyrosyl-[protein] + phosphate. The enzyme catalyses O-phospho-L-seryl-[protein] + H2O = L-seryl-[protein] + phosphate. The catalysed reaction is O-phospho-L-threonyl-[protein] + H2O = L-threonyl-[protein] + phosphate. Activates the Jnk signaling pathway. Dephosphorylates and deactivates p38 and stress-activated protein kinase/c-Jun N-terminal kinase (SAPK/JNK). The protein is Dual specificity protein phosphatase 22 (dusp22) of Xenopus tropicalis (Western clawed frog).